The following is an 833-amino-acid chain: Major vault protein (833 aa).

MVP repeat units follow at residues 54-118 (RHYC…QLIP), 119-170 (PNTG…TVIY), 171-223 (PNTA…TMLS), 224-278 (DLKA…VSLS), 280-328 (KEYV…LVVG), 329-380 (KEEA…MALD), and 381-433 (KNEG…SIQT).

The vault ribonucleoprotein particle is a huge (400 A x 670 A) cage structure of 12.9 MDa. It consists of a dimer of half-vaults, with each half-vault comprising 39 identical major vault protein (MVP) chains, PARP4 and one or more vault RNAs (vRNAs).

The protein resides in the cytoplasm. The protein localises to the nucleus. Its function is as follows. Required for normal vault structure. Vaults are multi-subunit structures that may act as scaffolds for proteins involved in signal transduction. Vaults may also play a role in nucleo-cytoplasmic transport. This chain is Major vault protein, found in Leishmania infantum.